Consider the following 198-residue polypeptide: Large ribosomal subunit protein bL25 (198 aa).

This sequence belongs to the bacterial ribosomal protein bL25 family. CTC subfamily. Part of the 50S ribosomal subunit; part of the 5S rRNA/L5/L18/L25 subcomplex. Contacts the 5S rRNA. Binds to the 5S rRNA independently of L5 and L18.

Functionally, this is one of the proteins that binds to the 5S RNA in the ribosome where it forms part of the central protuberance. The chain is Large ribosomal subunit protein bL25 from Azotobacter vinelandii (strain DJ / ATCC BAA-1303).